The primary structure comprises 196 residues: MVNIIWVSLTVIGLVFAMCNGTLQDVNEAVFKGAKEAITISFGLMSVLVFWLGLMKIAEQSGLLDIFSRMCRPFISKLFPDIPPDHPAMGYILSNLMANFFGLGNAATPLGIKAMEQMKKLNGNRSEASRSMITFLAVNTSCITLIPTTVIAVRMAYSSKTPTDIVGPSILATLISGIGAIIIDRYFYYRRKKKGR.

A run of 4 helical transmembrane segments spans residues M1–G21, A37–I57, I133–V153, and T163–I183.

The protein resides in the cell membrane. Its function is as follows. Involved in spore core dehydration; might be involved in the transport of something into or out of the forespore or could be required for some modification of the cortex peptidoglycan structure. The protein is Spore maturation protein A (spmA) of Bacillus subtilis (strain 168).